A 320-amino-acid chain; its full sequence is Beta-ketoacyl-[acyl-carrier-protein] synthase III (320 aa).

Residues Cys112 and His245 contribute to the active site. The segment at 246 to 250 (QANIR) is ACP-binding. Residue Asn275 is part of the active site.

It belongs to the thiolase-like superfamily. FabH family. In terms of assembly, homodimer.

The protein resides in the cytoplasm. The enzyme catalyses malonyl-[ACP] + acetyl-CoA + H(+) = 3-oxobutanoyl-[ACP] + CO2 + CoA. It participates in lipid metabolism; fatty acid biosynthesis. In terms of biological role, catalyzes the condensation reaction of fatty acid synthesis by the addition to an acyl acceptor of two carbons from malonyl-ACP. Catalyzes the first condensation reaction which initiates fatty acid synthesis and may therefore play a role in governing the total rate of fatty acid production. Possesses both acetoacetyl-ACP synthase and acetyl transacylase activities. Its substrate specificity determines the biosynthesis of branched-chain and/or straight-chain of fatty acids. The polypeptide is Beta-ketoacyl-[acyl-carrier-protein] synthase III (Streptococcus thermophilus (strain CNRZ 1066)).